The sequence spans 321 residues: Trem-like transcript 2 protein (321 aa).

An N-terminal signal peptide occupies residues 1–18 (MAPAFLLLLLLWPQGCVS). Over 19 to 268 (GPSADSVYTK…PSIRHQDVYS (250 aa)) the chain is Extracellular. In terms of domain architecture, Ig-like V-type spans 20-121 (PSADSVYTKV…ILYPLMGFQL (102 aa)). 2 disulfide bridges follow: cysteine 41-cysteine 105 and cysteine 56-cysteine 63. Asparagine 89 is a glycosylation site (N-linked (GlcNAc...) asparagine). 2 stretches are compositionally biased toward polar residues: residues 189-220 (GYSFTATSTTSQGPRRTMGSQTVTASPSNARD) and 227-241 (SISTKSGDLSTRSPT). Positions 189–241 (GYSFTATSTTSQGPRRTMGSQTVTASPSNARDSSAGPESISTKSGDLSTRSPT) are disordered. The chain crosses the membrane as a helical span at residues 269–289 (TVLGVVLTLLVLMLIMVYGFW). Residues 290–321 (KKRHMASYSMCSDPSTRDPPGRPEPYVEVYLI) lie on the Cytoplasmic side of the membrane.

As to quaternary structure, interacts with CD276 and this interaction enhances T-cell activation. As to expression, detected in cultured B-cells, T-cell leukemia and monocyte leukemia. Expressed constitutively on CD8 T-cells and induced on CD4 T-cells after activation.

The protein resides in the cell membrane. In terms of biological role, cell surface receptor that may play a role in the innate and adaptive immune response. Acts as a counter-receptor for CD276 and interaction with CD276 on T-cells enhances T-cell activation. This Homo sapiens (Human) protein is Trem-like transcript 2 protein (TREML2).